The primary structure comprises 191 residues: Probable DNA replication complex GINS protein PSF1 (191 aa).

Belongs to the GINS1/PSF1 family. Component of the GINS complex which is a heterotetramer of gins1, gins2, gins3 and gins4.

It is found in the nucleus. Its function is as follows. The GINS complex plays an essential role in the initiation of DNA replication. This is Probable DNA replication complex GINS protein PSF1 (gins1) from Dictyostelium discoideum (Social amoeba).